Reading from the N-terminus, the 283-residue chain is Transmembrane protein 119 (283 aa).

Residues 1 to 25 (MVSAAAPSLLILLLLLLGSVPATDA) form the signal peptide. The Extracellular segment spans residues 26–96 (RSVPLKATFL…IVDFFRQYVM (71 aa)). An O-linked (Xyl...) (chondroitin sulfate) serine glycan is attached at serine 41. A compositionally biased stretch (low complexity) spans 43-52 (EAEGSSASSP). The disordered stretch occupies residues 43–76 (EAEGSSASSPSLPPPWTPALSPTSMGPQPITLGG). Residues 97-117 (LIAVVGSLAFLLMFIVCAAVI) form a helical membrane-spanning segment. Topologically, residues 118–283 (TRQKQKASAY…CACSSVHPSV (166 aa)) are cytoplasmic. Disordered regions lie at residues 136-168 (KYVD…ALDS) and 183-283 (LKSP…HPSV). Composition is skewed to basic and acidic residues over residues 153–164 (VPDRAPDSRPEE) and 198–213 (RMVE…KGSQ). The span at 238–264 (GVLEGAVVAGEGQGELEGSLLLAQEAQ) shows a compositional bias: low complexity. Serine 272 carries the phosphoserine modification.

As to quaternary structure, interacts with SMAD1, SMAD5 and RUNX2. In terms of tissue distribution, expressed in brain microglia (at protein level). Detected in urine (at protein level). Elevated expression levels seen in the brain of patients with Alzheimer disease. Expressed by osteoblast-like cells in bone tissues and follicular dendritic cells in lymphoid tissues.

It is found in the cell membrane. The protein localises to the cytoplasm. The protein resides in the endoplasmic reticulum membrane. It localises to the secreted. Plays an important role in bone formation and normal bone mineralization. Promotes the differentiation of myoblasts into osteoblasts. May induce the commitment and differentiation of myoblasts into osteoblasts through an enhancement of BMP2 production and interaction with the BMP-RUNX2 pathway. Up-regulates the expression of ATF4, a transcription factor which plays a central role in osteoblast differentiation. Essential for normal spermatogenesis and late testicular differentiation. This is Transmembrane protein 119 (TMEM119) from Homo sapiens (Human).